The following is a 591-amino-acid chain: CDK5RAP3 protein homolog (591 aa).

Residues 232-250 show a composition bias toward low complexity; that stretch reads RAGAPSSAKGPASSASAPP. Disordered regions lie at residues 232–252 and 269–303; these read RAGA…PPAL and TAPP…DAGG. The span at 279–303 shows a compositional bias: gly residues; sequence AGAGASGQGGGIEIDWGDSGGDAGG. Short sequence motifs (shuffled ATG8-binding motif) lie at residues 311–314, 334–337, and 369–372; these read IDWD and INWD. Low complexity predominate over residues 386–401; it reads NNRAGDVAEGEAAASL. The disordered stretch occupies residues 386–416; that stretch reads NNRAGDVAEGEAAASLSGGGGGGASSGDPDD.

Belongs to the CDK5RAP3 family. In terms of assembly, substrate adapter component of the UFM1 ribosome E3 ligase (UREL) complex. Interacts with ATG8 family proteins.

Functionally, substrate adapter of E3 ligase complexes mediating ufmylation, the covalent attachment of the ubiquitin-like modifier UFM1 to substrate proteins, and which is involved in various processes, such as ribosome recycling and reticulophagy (also called ER-phagy). This is CDK5RAP3 protein homolog from Chlamydomonas reinhardtii (Chlamydomonas smithii).